The following is a 371-amino-acid chain: Transmembrane protein 229A (371 aa).

The disordered stretch occupies residues 1 to 30 (MAGSDVASEGPSPRDGATRRPGATGGLRSQ). The next 6 membrane-spanning stretches (helical) occupy residues 51 to 71 (LPAWMRLYFYGMHGITLDVLV), 117 to 137 (AFLFNFLLYPSAHVGLQTLAG), 235 to 255 (FLFFGMHGFLDEIFFTFFFNV), 269 to 289 (LWSFFMYGSCSFVVEKLYFHL), 301 to 321 (VPIYVIFIYAWEFSWGLGLRM), and 334 to 354 (LNFMGLITLMYLPGWLFLSVY).

The protein belongs to the TMEM229 family.

The protein localises to the membrane. This is Transmembrane protein 229A (Tmem229a) from Mus musculus (Mouse).